Here is a 257-residue protein sequence, read N- to C-terminus: Adenylate kinase (257 aa).

52–57 contacts ATP; sequence GAGKGT. The NMP stretch occupies residues 72 to 101; sequence ATGDMLRSQVAKKTELGKEAKKIMDQGGLV. Residues T73, R78, 99-101, 128-131, and Q135 contribute to the AMP site; these read GLV and GFPR. The segment at 169–206 is LID; sequence GRLVHPASGRSYHKIFNPPKNDMKDDVTGEPLIQRSDD. Residues R170 and 179-180 each bind ATP; that span reads SY. R203 and R214 together coordinate AMP. ATP is bound at residue Q242.

It belongs to the adenylate kinase family. AK2 subfamily. As to quaternary structure, monomer.

The protein localises to the cytoplasm. It is found in the cytosol. It localises to the mitochondrion intermembrane space. It carries out the reaction AMP + ATP = 2 ADP. Functionally, catalyzes the reversible transfer of the terminal phosphate group between ATP and AMP. Plays an important role in cellular energy homeostasis and in adenine nucleotide metabolism. Adenylate kinase activity is critical for regulation of the phosphate utilization and the AMP de novo biosynthesis pathways. In Aspergillus fumigatus (strain CBS 144.89 / FGSC A1163 / CEA10) (Neosartorya fumigata), this protein is Adenylate kinase (adk1).